The primary structure comprises 170 residues: Probable chemoreceptor glutamine deamidase CheD (170 aa).

This sequence belongs to the CheD family.

It catalyses the reaction L-glutaminyl-[protein] + H2O = L-glutamyl-[protein] + NH4(+). Its function is as follows. Probably deamidates glutamine residues to glutamate on methyl-accepting chemotaxis receptors (MCPs), playing an important role in chemotaxis. In Maridesulfovibrio salexigens (strain ATCC 14822 / DSM 2638 / NCIMB 8403 / VKM B-1763) (Desulfovibrio salexigens), this protein is Probable chemoreceptor glutamine deamidase CheD.